A 583-amino-acid polypeptide reads, in one-letter code: R-linalool synthase QH5, chloroplastic (583 aa).

The transit peptide at 1-40 (MASISLFPYSILKQTSPLARGTAYNRIYSTKTTGITVDVA) directs the protein to the chloroplast. Residues R298, D335, D339, R476, and D479 each coordinate (2E)-geranyl diphosphate. Mg(2+) contacts are provided by D335 and D339. Positions 335–339 (DDVYD) match the DDXXD motif motif. Mg(2+) is bound by residues D479, T483, and E487. D492 is a binding site for K(+).

The protein belongs to the terpene synthase family. Tpsb subfamily. The cofactor is Mg(2+). Mn(2+) serves as cofactor. Requires K(+) as cofactor. As to expression, expressed in every aerial organ except for the stem stele of mature plants. Not detected in roots.

It is found in the plastid. It localises to the chloroplast. It carries out the reaction (2E)-geranyl diphosphate + H2O = (R)-linalool + diphosphate. It functions in the pathway secondary metabolite biosynthesis; terpenoid biosynthesis. Monoterpene synthase that catalyzes the formation of (3R)-linalool from geranyl diphosphate, but not from isopentenyl diphosphate, dimethylallyl diphosphate, chrysanthemyl diphosphate, farnesyl diphosphate, (+)-copalyl diphosphate or geranylgeranyl diphosphate. The sequence is that of R-linalool synthase QH5, chloroplastic from Artemisia annua (Sweet wormwood).